The primary structure comprises 477 residues: MTPTNVKTRFAPSPTGRMHLGNLRTALFNALLARSRGGRFLLRLEDTDESRSSGAHAQTLMADLRWMGLHWDEGPEAGGEAGPYHQSERGAVYERYYRALEAADQAYPCFCTERELELSRKAQRAAGKPPRYAGTCAHLTAEERERRRAEGRRPTLRFRVPAEETVVFHDLVRGEQRFPTDEIGDFIIRRADGTAAFFFCNAVDDALMGVSHVLRGEDHLTNTPRQLLLLRALDLPQPEYGHINLITGDDGAPLSKRNGSLSVAELREAGWLPEAVLNYLARLGHHYTGEVESQLLDLQGLADAFRTDALGRAPARFDRHQLSHWQQLAVHRADEATLAPWLERLDDAVPADRRRALLAAVRDNILFPDDLAAWGQRVFGPLPALAPDTEAVIRDAGPAFYEAALAELETTAGDFPALAKAVRKATGAKGRQLFMPLRAALTGLCRGPELGPVYALMPVDIARCRLEQARELAATTP.

A 'HIGH' region motif is present at residues 12–22 (PSPTGRMHLGN). Zn(2+) is bound by residues Cys109, Cys111, Cys136, and His138. The short motif at 253–257 (PLSKR) is the 'KMSKS' region element. Lys256 is a binding site for ATP.

This sequence belongs to the class-I aminoacyl-tRNA synthetase family. Glutamate--tRNA ligase type 1 subfamily. Monomer. It depends on Zn(2+) as a cofactor.

The protein localises to the cytoplasm. It catalyses the reaction tRNA(Glu) + L-glutamate + ATP = L-glutamyl-tRNA(Glu) + AMP + diphosphate. Its function is as follows. Catalyzes the attachment of glutamate to tRNA(Glu) in a two-step reaction: glutamate is first activated by ATP to form Glu-AMP and then transferred to the acceptor end of tRNA(Glu). The sequence is that of Glutamate--tRNA ligase 2 from Alkalilimnicola ehrlichii (strain ATCC BAA-1101 / DSM 17681 / MLHE-1).